A 479-amino-acid polypeptide reads, in one-letter code: Adenylate kinase 8 (479 aa).

Adenylate kinase stretches follow at residues proline 58–glutamine 258 and proline 269–isoleucine 471. Alanine 67–threonine 72 provides a ligand contact to ATP. The segment at threonine 87–valine 113 is NMP 1. Residues glycine 140–glutamate 143, glutamine 147, and arginine 203 each bind AMP. An LID 1 region spans residues glycine 177–glutamine 206. Glycine 278–leucine 283 is an ATP binding site. The segment at serine 298–valine 327 is NMP 2. Residues methionine 325–valine 327, glycine 354–arginine 357, and glutamine 361 contribute to the AMP site. Residues leucine 391–aspartate 424 are LID 2. ATP is bound at residue arginine 392.

The protein belongs to the adenylate kinase family. In terms of assembly, interacts with CFAP45 and CFAP52; CFAP45 and AK8 dimerization may create a cavity at the interface of the dimer that can accommodate AMP.

The protein localises to the cytoplasm. The protein resides in the cytosol. It is found in the cytoskeleton. Its subcellular location is the cilium axoneme. It carries out the reaction AMP + ATP = 2 ADP. The enzyme catalyses a 2'-deoxyribonucleoside 5'-diphosphate + ATP = a 2'-deoxyribonucleoside 5'-triphosphate + ADP. It catalyses the reaction a ribonucleoside 5'-diphosphate + ATP = a ribonucleoside 5'-triphosphate + ADP. Functionally, nucleoside monophosphate (NMP) kinase that catalyzes the reversible transfer of the terminal phosphate group between nucleoside triphosphates and monophosphates. Has highest activity toward AMP, and weaker activity toward dAMP, CMP and dCMP. Also displays broad nucleoside diphosphate kinase activity. In Rattus norvegicus (Rat), this protein is Adenylate kinase 8 (Ak8).